The following is a 142-amino-acid chain: Ribosome maturation factor RimP (142 aa).

Belongs to the RimP family.

It localises to the cytoplasm. In terms of biological role, required for maturation of 30S ribosomal subunits. The protein is Ribosome maturation factor RimP of Nitrosospira multiformis (strain ATCC 25196 / NCIMB 11849 / C 71).